The chain runs to 169 residues: Nascent polypeptide-associated complex subunit alpha (169 aa).

In terms of domain architecture, NAC-A/B spans 14-78 (NKNEKKAREM…AKIDNFSQKL (65 aa)). The interval 85–128 (IQSVSKSPEEIQKDMQLAADQAGDESAKPAAAAEEDDEAPVDAG) is disordered. Positions 130-169 (LSAEDIELVASQANVSKNKAIKALKEHNGDIVNAIMALSK) constitute a UBA domain.

The protein belongs to the NAC-alpha family. Part of the nascent polypeptide-associated complex (NAC), consisting of EGD2 and EGD1. NAC associates with ribosomes via EGD1.

Its subcellular location is the cytoplasm. It localises to the nucleus. Its function is as follows. Component of the nascent polypeptide-associated complex (NAC), a dynamic component of the ribosomal exit tunnel, protecting the emerging polypeptides from interaction with other cytoplasmic proteins to ensure appropriate nascent protein targeting. The NAC complex also promotes mitochondrial protein import by enhancing productive ribosome interactions with the outer mitochondrial membrane and blocks the inappropriate interaction of ribosomes translating non-secretory nascent polypeptides with translocation sites in the membrane of the endoplasmic reticulum. EGD2 may also be involved in transcription regulation. In Vanderwaltozyma polyspora (strain ATCC 22028 / DSM 70294 / BCRC 21397 / CBS 2163 / NBRC 10782 / NRRL Y-8283 / UCD 57-17) (Kluyveromyces polysporus), this protein is Nascent polypeptide-associated complex subunit alpha (EGD2).